A 393-amino-acid chain; its full sequence is Na(+)/H(+) antiporter NhaA 2 (393 aa).

The next 11 helical transmembrane spans lie at 18–38 (SGGL…NSQL), 53–73 (LSVQ…MVGL), 91–111 (ILPG…YLAF), 120–140 (GWAI…SLLG), 149–169 (VFLA…IGLF), 172–192 (TGVS…LVAL), 208–228 (LVLW…GVLL), 263–283 (FIIV…GLGM), 294–314 (VAAG…LLLV), 332–352 (GTTL…LLAF), and 363–383 (IGIL…LRFS).

It belongs to the NhaA Na(+)/H(+) (TC 2.A.33) antiporter family.

It is found in the cell inner membrane. It catalyses the reaction Na(+)(in) + 2 H(+)(out) = Na(+)(out) + 2 H(+)(in). In terms of biological role, na(+)/H(+) antiporter that extrudes sodium in exchange for external protons. The protein is Na(+)/H(+) antiporter NhaA 2 of Brucella anthropi (strain ATCC 49188 / DSM 6882 / CCUG 24695 / JCM 21032 / LMG 3331 / NBRC 15819 / NCTC 12168 / Alc 37) (Ochrobactrum anthropi).